The sequence spans 208 residues: Holliday junction branch migration complex subunit RuvA (208 aa).

Positions 1 to 69 are domain I; it reads MIGFLQGYVV…EDQMVLFGFA (69 aa). Residues 70–148 are domain II; sequence VVAERDLFRQ…EWRDQAGLKT (79 aa). The interval 149-159 is flexible linker; it reads LPSAGPIDSVQ. Residues 159 to 208 form a domain III region; it reads QEDVEMTLLALGYTSQEVMRALQAVGQNTALAKNSDTEAWIREAIAWLSQ.

The protein belongs to the RuvA family. As to quaternary structure, homotetramer. Forms an RuvA(8)-RuvB(12)-Holliday junction (HJ) complex. HJ DNA is sandwiched between 2 RuvA tetramers; dsDNA enters through RuvA and exits via RuvB. An RuvB hexamer assembles on each DNA strand where it exits the tetramer. Each RuvB hexamer is contacted by two RuvA subunits (via domain III) on 2 adjacent RuvB subunits; this complex drives branch migration. In the full resolvosome a probable DNA-RuvA(4)-RuvB(12)-RuvC(2) complex forms which resolves the HJ.

Its subcellular location is the cytoplasm. In terms of biological role, the RuvA-RuvB-RuvC complex processes Holliday junction (HJ) DNA during genetic recombination and DNA repair, while the RuvA-RuvB complex plays an important role in the rescue of blocked DNA replication forks via replication fork reversal (RFR). RuvA specifically binds to HJ cruciform DNA, conferring on it an open structure. The RuvB hexamer acts as an ATP-dependent pump, pulling dsDNA into and through the RuvAB complex. HJ branch migration allows RuvC to scan DNA until it finds its consensus sequence, where it cleaves and resolves the cruciform DNA. In Acaryochloris marina (strain MBIC 11017), this protein is Holliday junction branch migration complex subunit RuvA.